A 322-amino-acid chain; its full sequence is Mas-related G-protein coupled receptor member X3 (322 aa).

The Extracellular segment spans residues 1 to 31 (MDSTIPVLGTELTPINGREETPCYKQTLSFT). Residues 32-52 (GLTCIVSLVALTGNAVVLWLL) form a helical membrane-spanning segment. Residues 53–60 (GCRMRRNA) lie on the Cytoplasmic side of the membrane. A helical membrane pass occupies residues 61 to 81 (VSIYILNLVAADFLFLSGHII). The Extracellular portion of the chain corresponds to 82–96 (CSPLRLINIRHPISK). The chain crosses the membrane as a helical span at residues 97–117 (ILSPVMTFPYFIGLSMLSAIS). Topologically, residues 118–140 (TERCLSILWPIWYHCRRPRYLSS) are cytoplasmic. The helical transmembrane segment at 141-161 (VMCVLLWALSLLRSILEWMFC) threads the bilayer. The Extracellular segment spans residues 162-177 (DFLFSGANSVWCETSD). The chain crosses the membrane as a helical span at residues 178-198 (FITIAWLVFLCVVLCGSSLVL). The Cytoplasmic segment spans residues 199 to 213 (LVRILCGSRKMPLTR). A helical membrane pass occupies residues 214–234 (LYVTILLTVLVFLLCGLPFGI). Residues 235-254 (QWALFSRIHLDWKVLFCHVH) are Extracellular-facing. The helical transmembrane segment at 255–275 (LVSIFLSALNSSANPIIYFFV) threads the bilayer. Residues 276-322 (GSFRQRQNRQNLKLVLQRALQDTPEVDEGGGWLPQETLELSGSRLEQ) lie on the Cytoplasmic side of the membrane.

This sequence belongs to the G-protein coupled receptor 1 family. Mas subfamily. As to expression, uniquely localized in a subset of small dorsal root and trigeminal sensory neurons.

It localises to the cell membrane. Orphan receptor. Probably involved in the function of nociceptive neurons. May regulate nociceptor function and/or development, including the sensation or modulation of pain. Potently activated by enkephalins. This Homo sapiens (Human) protein is Mas-related G-protein coupled receptor member X3 (MRGPRX3).